The sequence spans 232 residues: Phosphatidylserine decarboxylase proenzyme (232 aa).

The active-site Schiff-base intermediate with substrate; via pyruvic acid is Ser-190. Pyruvic acid (Ser); by autocatalysis is present on Ser-190.

This sequence belongs to the phosphatidylserine decarboxylase family. PSD-A subfamily. As to quaternary structure, heterodimer of a large membrane-associated beta subunit and a small pyruvoyl-containing alpha subunit. Requires pyruvate as cofactor. Is synthesized initially as an inactive proenzyme. Formation of the active enzyme involves a self-maturation process in which the active site pyruvoyl group is generated from an internal serine residue via an autocatalytic post-translational modification. Two non-identical subunits are generated from the proenzyme in this reaction, and the pyruvate is formed at the N-terminus of the alpha chain, which is derived from the carboxyl end of the proenzyme. The post-translation cleavage follows an unusual pathway, termed non-hydrolytic serinolysis, in which the side chain hydroxyl group of the serine supplies its oxygen atom to form the C-terminus of the beta chain, while the remainder of the serine residue undergoes an oxidative deamination to produce ammonia and the pyruvoyl prosthetic group on the alpha chain.

It is found in the cell membrane. The catalysed reaction is a 1,2-diacyl-sn-glycero-3-phospho-L-serine + H(+) = a 1,2-diacyl-sn-glycero-3-phosphoethanolamine + CO2. It participates in phospholipid metabolism; phosphatidylethanolamine biosynthesis; phosphatidylethanolamine from CDP-diacylglycerol: step 2/2. Its function is as follows. Catalyzes the formation of phosphatidylethanolamine (PtdEtn) from phosphatidylserine (PtdSer). The sequence is that of Phosphatidylserine decarboxylase proenzyme from Cereibacter sphaeroides (strain KD131 / KCTC 12085) (Rhodobacter sphaeroides).